A 558-amino-acid polypeptide reads, in one-letter code: SPATS2-like protein (558 aa).

A2 bears the N-acetylalanine mark. Basic residues predominate over residues 63 to 79; the sequence is GKKKNNKRKRSKSKQHQ. Disordered regions lie at residues 63–134 and 157–201; these read GKKK…EKKI and KLSL…KSNT. Residues 80–92 show a composition bias toward basic and acidic residues; that stretch reads GNKDAKDKVERPE. At S120 the chain carries Phosphoserine. Positions 271-344 form a coiled coil; it reads LMAEMDKVKE…ARFSCDIEQL (74 aa). A disordered region spans residues 380 to 525; sequence TSGKQSNFSR…DTSEARPFRG (146 aa). Polar residues-rich tracts occupy residues 381–390, 410–432, and 440–456; these read SGKQSNFSRK, SLPS…GSSN, and QYHN…QGSG. A Phosphoserine modification is found at S455. A compositionally biased stretch (basic residues) spans 469-485; the sequence is HEHRRQPHNGFRPKNKG. The span at 513–522 shows a compositional bias: basic and acidic residues; the sequence is HAADTSEARP.

It belongs to the SPATS2 family.

The protein localises to the cytoplasm. Its subcellular location is the nucleus. The protein resides in the nucleolus. This is SPATS2-like protein (SPATS2L) from Homo sapiens (Human).